Reading from the N-terminus, the 325-residue chain is Beta-ketoacyl-[acyl-carrier-protein] synthase III (325 aa).

Catalysis depends on residues Cys-112 and His-250. The ACP-binding stretch occupies residues 251-255; sequence QANSR. Residue Asn-280 is part of the active site.

This sequence belongs to the thiolase-like superfamily. FabH family. Homodimer.

Its subcellular location is the cytoplasm. The catalysed reaction is malonyl-[ACP] + acetyl-CoA + H(+) = 3-oxobutanoyl-[ACP] + CO2 + CoA. It functions in the pathway lipid metabolism; fatty acid biosynthesis. Catalyzes the condensation reaction of fatty acid synthesis by the addition to an acyl acceptor of two carbons from malonyl-ACP. Catalyzes the first condensation reaction which initiates fatty acid synthesis and may therefore play a role in governing the total rate of fatty acid production. Possesses both acetoacetyl-ACP synthase and acetyl transacylase activities. Its substrate specificity determines the biosynthesis of branched-chain and/or straight-chain of fatty acids. The protein is Beta-ketoacyl-[acyl-carrier-protein] synthase III of Lactococcus lactis subsp. cremoris (strain MG1363).